The following is a 110-amino-acid chain: Cell division protein FtsB (110 aa).

The Cytoplasmic segment spans residues 1-3 (MRL). A helical membrane pass occupies residues 4–21 (IILCLAALVLLIQFPLWL). Topologically, residues 22 to 110 (GKGGWLRVWD…PPKIEPKEKR (89 aa)) are periplasmic. A coiled-coil region spans residues 31 to 64 (DLDQQVIAAQKKNDELRARNAKLNSEVQDLKEGT).

It belongs to the FtsB family. Part of a complex composed of FtsB, FtsL and FtsQ.

The protein resides in the cell inner membrane. Essential cell division protein. May link together the upstream cell division proteins, which are predominantly cytoplasmic, with the downstream cell division proteins, which are predominantly periplasmic. This Herminiimonas arsenicoxydans protein is Cell division protein FtsB.